A 314-amino-acid polypeptide reads, in one-letter code: Protein translocase subunit SecF (314 aa).

6 helical membrane-spanning segments follow: residues 17–37, 137–157, 158–178, 188–210, 250–270, and 272–292; these read AVAV…TRGL, QGTY…WWRY, ELNF…ITLG, SLPV…IVVF, TLIV…GFAF, and LLVG…LLLV.

Belongs to the SecD/SecF family. SecF subfamily. Forms a complex with SecD. Part of the essential Sec protein translocation apparatus which comprises SecA, SecYEG and auxiliary proteins SecDF. Other proteins may also be involved.

It is found in the cell inner membrane. In terms of biological role, part of the Sec protein translocase complex. Interacts with the SecYEG preprotein conducting channel. SecDF uses the proton motive force (PMF) to complete protein translocation after the ATP-dependent function of SecA. This is Protein translocase subunit SecF from Desulfurispirillum indicum (strain ATCC BAA-1389 / DSM 22839 / S5).